A 325-amino-acid chain; its full sequence is Elongation factor P--(R)-beta-lysine ligase (325 aa).

76 to 78 is a substrate binding site; sequence SPE. ATP contacts are provided by residues 100 to 102 and asparagine 109; that span reads RNE. Tyrosine 118 contacts substrate. 244 to 245 provides a ligand contact to ATP; sequence EL. Residue glutamate 251 coordinates substrate. Glycine 300 lines the ATP pocket.

The protein belongs to the class-II aminoacyl-tRNA synthetase family. EpmA subfamily. Homodimer.

It catalyses the reaction D-beta-lysine + L-lysyl-[protein] + ATP = N(6)-((3R)-3,6-diaminohexanoyl)-L-lysyl-[protein] + AMP + diphosphate + H(+). In terms of biological role, with EpmB is involved in the beta-lysylation step of the post-translational modification of translation elongation factor P (EF-P). Catalyzes the ATP-dependent activation of (R)-beta-lysine produced by EpmB, forming a lysyl-adenylate, from which the beta-lysyl moiety is then transferred to the epsilon-amino group of a conserved specific lysine residue in EF-P. The polypeptide is Elongation factor P--(R)-beta-lysine ligase (Proteus mirabilis (strain HI4320)).